The primary structure comprises 816 residues: Mechanosensitive cation channel TMEM63B (816 aa).

Over 1–46 the chain is Extracellular; it reads MLPYVIATLGSAGSTCKASTCSNSTKDYCYSARIRSTVLQGLPFGG. A helical membrane pass occupies residues 47–71; the sequence is VPTVLALDFMCFLALLFVFSILRKV. S-palmitoyl cysteine attachment occurs at residues Cys-57 and Cys-119. The Cytoplasmic portion of the chain corresponds to 72-138; it reads AWDYGRLALV…KDDEIRDKCG (67 aa). The helical transmembrane segment at 139–171 threads the bilayer; sequence GDAVHYLSFQRHIIGLLVAVGVLSVGIVLPVNF. Residues 172-195 are Extracellular-facing; sequence SGDLLENNAYSFGRTTIANLNSGN. Residues 196-220 form a helical membrane-spanning segment; sequence NLLWLHTSFAFLYLLLTVYSMRRHT. Residues 221-420 are Cytoplasmic-facing; sequence SKMRYKEDDL…IYWEHLSIRG (200 aa). The tract at residues 224–419 is intracellular linker IL2; confers mechanosensitivity; it reads RYKEDDLVKR…NIYWEHLSIR (196 aa). Residues Cys-375 and Cys-391 are each lipidated (S-palmitoyl cysteine). A helical membrane pass occupies residues 421 to 450; it reads FIWWIRCLVINVVLFILLFFLTTPAIIITT. Topologically, residues 451–465 are extracellular; that stretch reads MDKFNVTKPVEYLNN. Residues 466 to 495 traverse the membrane as a helical segment; sequence PIITQFFPTLLLWCFSALLPTIVYYSAFFE. Over 496–499 the chain is Cytoplasmic; sequence AHWT. The helical transmembrane segment at 500–536 threads the bilayer; the sequence is RSGENRTTMHKCYTFLIFMVLLLPSLGLSSLDVFFRW. The Extracellular portion of the chain corresponds to 537 to 559; sequence LFDKKFLAEAAVRFECVFLPDNG. Residues 560–592 traverse the membrane as a helical segment; that stretch reads AFFVNYVIASAFIGNAMDLLRIPGLLMYMIRLC. The gating helix stretch occupies residues 560–592; it reads AFFVNYVIASAFIGNAMDLLRIPGLLMYMIRLC. Residues 593–612 are Cytoplasmic-facing; that stretch reads LARSAAERRNVKRHQAYEFQ. Residues 613–631 form a helical membrane-spanning segment; that stretch reads FGAAYAWMMCVFTVVMTYS. Residues 632 to 634 lie on the Extracellular side of the membrane; the sequence is ITC. Residues 635-659 form a helical membrane-spanning segment; sequence PIIVPFGLMYMLLKHLVDRYNLYYA. The Cytoplasmic portion of the chain corresponds to 660–666; it reads YLPAKLD. A helical transmembrane segment spans residues 667-695; that stretch reads KKIHSGAVNQVVAAPILCLFWLLFFSTMR. Residues 696 to 700 lie on the Extracellular side of the membrane; sequence TGFLA. Residues 701–721 form a helical membrane-spanning segment; it reads PTSMFTFVVLVITIVICLCHV. S-palmitoyl cysteine attachment occurs at residues Cys-719 and Cys-722. Residues 722–816 lie on the Cytoplasmic side of the membrane; sequence CFGHFKYLSA…DSLIENEIRQ (95 aa).

The protein belongs to the CSC1 (TC 1.A.17) family. As to quaternary structure, monomer. Palmitoylation is required for localization to the plasma membrane and stability.

The protein localises to the cell membrane. The protein resides in the lysosome membrane. It is found in the early endosome membrane. The enzyme catalyses Ca(2+)(in) = Ca(2+)(out). The catalysed reaction is Mg(2+)(in) = Mg(2+)(out). It catalyses the reaction K(+)(in) = K(+)(out). It carries out the reaction Na(+)(in) = Na(+)(out). The enzyme catalyses Cs(+)(in) = Cs(+)(out). In terms of biological role, mechanosensitive cation channel with low conductance and high activation threshold. Osmosensitive cation channel preferentially activated by hypotonic stress. Also acts as a phospholipid scramblase in response to changes in membrane structure: upon changes in membrane curvature and thickness, alters its conformation and translocates phospholipids, thereby controlling plasma membrane lipid distribution. The chain is Mechanosensitive cation channel TMEM63B from Gallus gallus (Chicken).